We begin with the raw amino-acid sequence, 117 residues long: MAGRSGDSDEDLLRAIRLIKILYQSNPPPNTEGTTRQARRNRRRRWRARQRQINSIGERILSTYLGRPEEPVPLQLPPLERLTLNCNEDCGTSGTQGVGSPQISVESPAILGSGTEE.

Serine 5 and serine 8 each carry phosphoserine; by host CK2. Residues 18–26 (LIKILYQSN) are homomultimerization. Residues 24 to 49 (QSNPPPNTEGTTRQARRNRRRRWRAR) are disordered. The Nuclear localization signal and RNA-binding (RRE) motif lies at 35 to 51 (TRQARRNRRRRWRARQR). Over residues 37–49 (QARRNRRRRWRAR) the composition is skewed to basic residues. The short motif at 74–85 (LQLPPLERLTLN) is the Nuclear export signal and binding to XPO1 element. Residues serine 93 and serine 100 each carry the phosphoserine; by host modification. The span at 93 to 105 (SGTQGVGSPQISV) shows a compositional bias: polar residues. A disordered region spans residues 93–117 (SGTQGVGSPQISVESPAILGSGTEE).

This sequence belongs to the HIV-1 REV protein family. In terms of assembly, homomultimer; when bound to the RRE. Multimeric assembly is essential for activity and may involve XPO1. Binds to human KPNB1, XPO1, TNPO1, RANBP5 and IPO7. Interacts with the viral Integrase. Interacts with human KHDRBS1. Interacts with human NAP1; this interaction decreases Rev multimerization and stimulates its activity. Interacts with human DEAD-box helicases DDX3 and DDX24; these interactions may serve for viral RNA export to the cytoplasm and packaging, respectively. Interacts with human PSIP1; this interaction may inhibit HIV-1 DNA integration by promoting dissociation of the Integrase-LEDGF/p75 complex. Asymmetrically arginine dimethylated at one site by host PRMT6. Methylation impairs the RNA-binding activity and export of viral RNA from the nucleus to the cytoplasm. Post-translationally, phosphorylated by protein kinase CK2. Presence of, and maybe binding to the N-terminus of the regulatory beta subunit of CK2 is necessary for CK2-mediated Rev's phosphorylation.

Its subcellular location is the host nucleus. The protein localises to the host nucleolus. It localises to the host cytoplasm. Its function is as follows. Escorts unspliced or incompletely spliced viral pre-mRNAs (late transcripts) out of the nucleus of infected cells. These pre-mRNAs carry a recognition sequence called Rev responsive element (RRE) located in the env gene, that is not present in fully spliced viral mRNAs (early transcripts). This function is essential since most viral proteins are translated from unspliced or partially spliced pre-mRNAs which cannot exit the nucleus by the pathway used by fully processed cellular mRNAs. Rev itself is translated from a fully spliced mRNA that readily exits the nucleus. Rev's nuclear localization signal (NLS) binds directly to KPNB1/Importin beta-1 without previous binding to KPNA1/Importin alpha-1. KPNB1 binds to the GDP bound form of RAN (Ran-GDP) and targets Rev to the nucleus. In the nucleus, the conversion from Ran-GDP to Ran-GTP dissociates Rev from KPNB1 and allows Rev's binding to the RRE in viral pre-mRNAs. Rev multimerization on the RRE via cooperative assembly exposes its nuclear export signal (NES) to the surface. Rev can then form a complex with XPO1/CRM1 and Ran-GTP, leading to nuclear export of the complex. Conversion from Ran-GTP to Ran-GDP mediates dissociation of the Rev/RRE/XPO1/RAN complex, so that Rev can return to the nucleus for a subsequent round of export. Beside KPNB1, also seems to interact with TNPO1/Transportin-1, RANBP5/IPO5 and IPO7/RANBP7 for nuclear import. The nucleoporin-like HRB/RIP is an essential cofactor that probably indirectly interacts with Rev to release HIV RNAs from the perinuclear region to the cytoplasm. The chain is Protein Rev from Human immunodeficiency virus type 1 group M subtype A (isolate MAL) (HIV-1).